A 394-amino-acid chain; its full sequence is MIVFIFLAMGLSLENEYTSQTNNCTYLREQCLRDANGCKHAWRVMEDACNDSDPGDPCKMRNSSYCNLSIQYLVESNFQFKECLCTDDFYCTVNKLLGKKCINKSDNVKEDKFKWNLTTRSHHGFKGMWSCLEVAEACVGDVVCNAQLASYLKACSANGNPCDLKQCQAAIRFFYQNIPFNIAQMLAFCDCAQSDIPCQQSKEALHSKTCAVNMVPPPTCLSVIRSCQNDELCRRHYRTFQSKCWQRVTRKCHEDENCISTLSKQDLTCSGSDDCKAAYIDILGTVLQVQCTCRTITQSEESLCKIFQHMLHRKSCFNYPTLSNVKGMALYTRKHANKITLTGFHSPFNGEVIYAAMCMTVTCGILLLVMVKLRTSRISSKARDPSSIQIPGEL.

The first 18 residues, Met-1–Thr-18, serve as a signal peptide directing secretion. The Extracellular segment spans residues Ser-19–Glu-351. Asn-23, Asn-50, Asn-62, Asn-67, Asn-103, and Asn-116 each carry an N-linked (GlcNAc...) asparagine glycan. Disulfide bonds link Cys-131–Cys-189, Cys-138–Cys-144, Cys-155–Cys-167, Cys-162–Cys-210, Cys-191–Cys-198, Cys-220–Cys-291, Cys-227–Cys-233, Cys-244–Cys-275, Cys-252–Cys-258, Cys-269–Cys-316, and Cys-293–Cys-304. Residues Ala-149 to Gln-228 form a required for interaction with GDF15 region. The helical transmembrane segment at Val-352 to Val-371 threads the bilayer. The Cytoplasmic segment spans residues Lys-372–Leu-394.

The protein belongs to the GDNFR family. As to quaternary structure, interacts (via the extracellular domain) with GDF15 and RET; receptor of GDF15, mediates cellular signaling through interaction with RET after GDF15-binding. Interaction with RET requires previous GDF15-binding. Cleaved and inactivated by MMP14, inhibiting the GDF15-GFRAL aversive response. As to expression, expressed in the brainstem, restricted to cells in the area postrema and the immediately adjacent region of the nucleus tractus solitarius (at protein level). Detected at low levels in testis and adipose tissue.

The protein localises to the cell membrane. Specifically inhibited by 3P10 monoclonal antibody. Strongly activated by LY3463251, a long-acting and stable agonist composed of GDF15 conjugated monomeric human IgG4 Fc. Functionally, brainstem-restricted receptor for GDF15 hormone, which triggers an aversive response, characterized by nausea, vomiting, and/or loss of appetite in response to various stresses. The aversive response is both required to reduce continuing exposure to those stresses at the time of exposure and to promote avoidance behavior in the future. The GDF15-GFRAL aversive response is triggered by stresses, such as anticancer drugs (camptothecin or cisplatin), cancers or drugs such as metformin. Upon interaction with its ligand, GDF15, mediates the GDF15-induced autophosphorylation and activation of the RET tyrosine kinase receptor, leading to activation of MAPK- and AKT- signaling pathways. Ligand-binding activates GFRAL-expressing neurons localized in the area postrema and nucleus tractus solitarius of the brainstem. The GDF15-GFRAL signal induces expression of genes involved in metabolism, such as lipid metabolism in adipose tissues. The sequence is that of GDNF family receptor alpha-like from Homo sapiens (Human).